The sequence spans 137 residues: Large ribosomal subunit protein uL16 (137 aa).

It belongs to the universal ribosomal protein uL16 family. In terms of assembly, part of the 50S ribosomal subunit.

Its function is as follows. Binds 23S rRNA and is also seen to make contacts with the A and possibly P site tRNAs. This chain is Large ribosomal subunit protein uL16, found in Paracoccus denitrificans (strain Pd 1222).